A 114-amino-acid chain; its full sequence is UPF0473 protein OEOE_1164 (114 aa).

Belongs to the UPF0473 family.

The protein is UPF0473 protein OEOE_1164 of Oenococcus oeni (strain ATCC BAA-331 / PSU-1).